The sequence spans 263 residues: Shikimate dehydrogenase (NADP(+)) (263 aa).

Residues 16–18 and threonine 65 each bind shikimate; that span reads SKS. Catalysis depends on lysine 69, which acts as the Proton acceptor. Shikimate-binding residues include asparagine 90 and aspartate 105. Residues 125-129 and leucine 208 contribute to the NADP(+) site; that span reads GSGGS. Residue tyrosine 210 participates in shikimate binding. Glycine 230 lines the NADP(+) pocket.

Belongs to the shikimate dehydrogenase family. In terms of assembly, homodimer.

It carries out the reaction shikimate + NADP(+) = 3-dehydroshikimate + NADPH + H(+). It functions in the pathway metabolic intermediate biosynthesis; chorismate biosynthesis; chorismate from D-erythrose 4-phosphate and phosphoenolpyruvate: step 4/7. Functionally, involved in the biosynthesis of the chorismate, which leads to the biosynthesis of aromatic amino acids. Catalyzes the reversible NADPH linked reduction of 3-dehydroshikimate (DHSA) to yield shikimate (SA). This is Shikimate dehydrogenase (NADP(+)) from Helicobacter pylori (strain P12).